A 520-amino-acid polypeptide reads, in one-letter code: 2-isopropylmalate synthase (520 aa).

The Pyruvate carboxyltransferase domain maps to 12–274 (IRIFDTTLRD…DSAINTPRIV (263 aa)). Mn(2+) contacts are provided by Asp-21, His-209, His-211, and Asn-245. The tract at residues 396–520 (RLASMTISDV…VVAGKTAAVA (125 aa)) is regulatory domain.

This sequence belongs to the alpha-IPM synthase/homocitrate synthase family. LeuA type 1 subfamily. Homodimer. The cofactor is Mn(2+).

The protein resides in the cytoplasm. It carries out the reaction 3-methyl-2-oxobutanoate + acetyl-CoA + H2O = (2S)-2-isopropylmalate + CoA + H(+). The protein operates within amino-acid biosynthesis; L-leucine biosynthesis; L-leucine from 3-methyl-2-oxobutanoate: step 1/4. Its function is as follows. Catalyzes the condensation of the acetyl group of acetyl-CoA with 3-methyl-2-oxobutanoate (2-ketoisovalerate) to form 3-carboxy-3-hydroxy-4-methylpentanoate (2-isopropylmalate). In Xanthomonas euvesicatoria pv. vesicatoria (strain 85-10) (Xanthomonas campestris pv. vesicatoria), this protein is 2-isopropylmalate synthase.